We begin with the raw amino-acid sequence, 747 residues long: Protein O-mannosyl-transferase 1 (747 aa).

The next 7 helical transmembrane spans lie at 30 to 50 (PLVV…LGLL), 90 to 110 (FGHM…NFLW), 121 to 141 (VPVW…VPMA), 176 to 196 (LLES…LKFF), 205 to 225 (SVHW…AVGI), 228 to 248 (MGIF…WHLI), and 267 to 287 (VALL…HLML). MIR domains are found at residues 318-381 (PLEV…VKDP), 392-449 (PRPV…LDIV), and 453-513 (SNQD…VEEH). 3 N-linked (GlcNAc...) asparagine glycosylation sites follow: N435, N471, and N539. The next 3 helical transmembrane spans lie at 597–617 (IVIW…FFWY), 636–656 (WVLA…PFFL), and 660–680 (MLFL…LPIV).

It belongs to the glycosyltransferase 39 family.

It is found in the endoplasmic reticulum membrane. It carries out the reaction a di-trans,poly-cis-dolichyl beta-D-mannosyl phosphate + L-seryl-[protein] = 3-O-(alpha-D-mannosyl)-L-seryl-[protein] + a di-trans,poly-cis-dolichyl phosphate + H(+). The enzyme catalyses a di-trans,poly-cis-dolichyl beta-D-mannosyl phosphate + L-threonyl-[protein] = 3-O-(alpha-D-mannosyl)-L-threonyl-[protein] + a di-trans,poly-cis-dolichyl phosphate + H(+). Its pathway is protein modification; protein glycosylation. In terms of biological role, transfers mannosyl residues to the hydroxyl group of serine or threonine residues. Coexpression of both POMT1 and POMT2 is necessary for enzyme activity, expression of either POMT1 or POMT2 alone is insufficient. Essentially dedicated to O-mannosylation of alpha-DAG1 and few other proteins but not of cadherins and protocaherins. The chain is Protein O-mannosyl-transferase 1 (Pomt1) from Rattus norvegicus (Rat).